The following is a 78-amino-acid chain: Acyl carrier protein (78 aa).

The Carrier domain occupies 1-76 (MSLEDDVKLI…DVITYIKTRQ (76 aa)). S36 is subject to O-(pantetheine 4'-phosphoryl)serine.

It belongs to the acyl carrier protein (ACP) family. In terms of processing, 4'-phosphopantetheine is transferred from CoA to a specific serine of apo-ACP by AcpS. This modification is essential for activity because fatty acids are bound in thioester linkage to the sulfhydryl of the prosthetic group.

Its subcellular location is the cytoplasm. Its pathway is lipid metabolism; fatty acid biosynthesis. Carrier of the growing fatty acid chain in fatty acid biosynthesis. The protein is Acyl carrier protein of Chlamydia felis (strain Fe/C-56) (Chlamydophila felis).